The primary structure comprises 309 residues: Uracil phosphoribosyltransferase homolog (309 aa).

The tract at residues 1–41 is disordered; the sequence is MATELQCPDSMPCHNQQVNSASTPSPEQLRPGDPILDHAGG. The span at 13-26 shows a compositional bias: polar residues; that stretch reads CHNQQVNSASTPSP. Ser-25 is modified (phosphoserine). GTP-binding positions include Arg-133, Arg-142, and 176–179; that span reads EKGN. A 5-phospho-alpha-D-ribose 1-diphosphate-binding site is contributed by Arg-186. GTP is bound by residues Arg-203 and Arg-232. 238–246 serves as a coordination point for 5-phospho-alpha-D-ribose 1-diphosphate; it reads YPILSTGNT. A uracil-binding site is contributed by 299–301; the sequence is THF.

This sequence belongs to the UPRTase family.

The protein resides in the cytoplasm. The protein localises to the nucleus. The chain is Uracil phosphoribosyltransferase homolog (UPRT) from Macaca fascicularis (Crab-eating macaque).